A 383-amino-acid polypeptide reads, in one-letter code: GDSL esterase/lipase At1g28610 (383 aa).

A signal peptide spans 1–22 (MASLDSLVSFFLSTLFVTIVSS). Residue Ser-38 is the Nucleophile of the active site. Residues Asn-134, Asn-184, and Asn-315 are each glycosylated (N-linked (GlcNAc...) asparagine). Residues Asp-340 and His-343 contribute to the active site.

Belongs to the 'GDSL' lipolytic enzyme family.

It is found in the secreted. This is GDSL esterase/lipase At1g28610 from Arabidopsis thaliana (Mouse-ear cress).